The primary structure comprises 64 residues: DNA-binding protein 7a (64 aa).

Lys-5 and Lys-7 each carry N6-methyllysine; partial.

It belongs to the 7 kDa DNA-binding/endoribonuclease P2 family. As to quaternary structure, homodimer. In terms of processing, lys-5 and Lys-7 were found to be 60% monomethylated. Post-translationally, ADP-ribosylated by endogenous proteins in vitro.

Can constrain negative DNA supercoils. May be involved in maintaining the integrity of the genome at high temperature. Has RNA endonuclease activity with a narrow substrate specificity; the cleavage products are 3'-phosphooligonucleotides. This Saccharolobus solfataricus (strain ATCC 35092 / DSM 1617 / JCM 11322 / P2) (Sulfolobus solfataricus) protein is DNA-binding protein 7a (sso7a1).